The primary structure comprises 252 residues: Thiamine thiazole synthase (252 aa).

NAD(+)-binding positions include Ser-35, 54 to 55, Gly-62, Val-126, and 152 to 154; these read EK and HVD. Positions 154 and 169 each coordinate Fe cation. Met-217 is an NAD(+) binding site. Arg-227 contributes to the glycine binding site.

The protein belongs to the THI4 family. In terms of assembly, homooctamer; tetramer of dimers. The cofactor is Fe(2+).

It carries out the reaction hydrogen sulfide + glycine + NAD(+) = ADP-5-ethyl-4-methylthiazole-2-carboxylate + nicotinamide + 3 H2O + H(+). It functions in the pathway cofactor biosynthesis; thiamine diphosphate biosynthesis. Functionally, involved in the biosynthesis of the thiazole moiety of thiamine. Catalyzes the conversion of NAD and glycine to adenosine diphosphate 5-(2-hydroxyethyl)-4-methylthiazole-2-carboxylate (ADT), an adenylated thiazole intermediate, using free sulfide as a source of sulfur. This Pyrococcus abyssi (strain GE5 / Orsay) protein is Thiamine thiazole synthase.